A 251-amino-acid polypeptide reads, in one-letter code: Ubiquinone/menaquinone biosynthesis C-methyltransferase UbiE (251 aa).

Residues Thr-74, Asp-95, and Asn-123 to Ala-124 contribute to the S-adenosyl-L-methionine site.

This sequence belongs to the class I-like SAM-binding methyltransferase superfamily. MenG/UbiE family.

The catalysed reaction is a 2-demethylmenaquinol + S-adenosyl-L-methionine = a menaquinol + S-adenosyl-L-homocysteine + H(+). The enzyme catalyses a 2-methoxy-6-(all-trans-polyprenyl)benzene-1,4-diol + S-adenosyl-L-methionine = a 5-methoxy-2-methyl-3-(all-trans-polyprenyl)benzene-1,4-diol + S-adenosyl-L-homocysteine + H(+). It functions in the pathway quinol/quinone metabolism; menaquinone biosynthesis; menaquinol from 1,4-dihydroxy-2-naphthoate: step 2/2. Its pathway is cofactor biosynthesis; ubiquinone biosynthesis. Functionally, methyltransferase required for the conversion of demethylmenaquinol (DMKH2) to menaquinol (MKH2) and the conversion of 2-polyprenyl-6-methoxy-1,4-benzoquinol (DDMQH2) to 2-polyprenyl-3-methyl-6-methoxy-1,4-benzoquinol (DMQH2). In Erwinia tasmaniensis (strain DSM 17950 / CFBP 7177 / CIP 109463 / NCPPB 4357 / Et1/99), this protein is Ubiquinone/menaquinone biosynthesis C-methyltransferase UbiE.